The sequence spans 56 residues: uncharacterized protein (56 aa).

A helical membrane pass occupies residues 30–52 (IKIGIICVIITWAIFSINHHHTI).

The protein localises to the membrane. This is an uncharacterized protein from Dictyostelium discoideum (Social amoeba).